A 153-amino-acid polypeptide reads, in one-letter code: Troponin C (153 aa).

4 consecutive EF-hand domains span residues 9–44 (EQVQMLRKAFDMFDRDKKGYIHTNMVSTILRTLGQT), 45–80 (FEENDLQQLIIEIDADGSGELEFDEFLTLTARFLVE), 85–120 (AMQEELREAFRMYDKEGNGYIPTSALREILRALDDK), and 121–153 (LTEDELDEMIAEIDTDGSGTVDFDEFMEMMTGD). Ca(2+)-binding residues include aspartate 58, aspartate 60, serine 62, glutamate 64, and glutamate 69. Aspartate 134, aspartate 136, serine 138, threonine 140, and glutamate 145 together coordinate Ca(2+).

This sequence belongs to the troponin C family.

Its function is as follows. Troponin is the central regulatory protein of striated muscle contraction. Tn consists of three components: Tn-I which is the inhibitor of actomyosin ATPase, Tn-T which contains the binding site for tropomyosin and Tn-C. The binding of calcium to Tn-C abolishes the inhibitory action of Tn on actin filaments. The polypeptide is Troponin C (Tyrophagus putrescentiae (Mold mite)).